Here is a 353-residue protein sequence, read N- to C-terminus: Holliday junction branch migration complex subunit RuvB (353 aa).

The disordered stretch occupies residues methionine 1 to threonine 25. The segment at methionine 1 to tyrosine 188 is large ATPase domain (RuvB-L). ATP contacts are provided by residues leucine 27, arginine 28, glycine 69, lysine 72, threonine 73, serine 74, glutamate 135–tyrosine 137, arginine 178, tyrosine 188, and arginine 225. Threonine 73 contributes to the Mg(2+) binding site. The interval glutamate 189 to aspartate 259 is small ATPAse domain (RuvB-S). The interval glutamate 262–valine 353 is head domain (RuvB-H). Arginine 317 and arginine 322 together coordinate DNA.

It belongs to the RuvB family. As to quaternary structure, homohexamer. Forms an RuvA(8)-RuvB(12)-Holliday junction (HJ) complex. HJ DNA is sandwiched between 2 RuvA tetramers; dsDNA enters through RuvA and exits via RuvB. An RuvB hexamer assembles on each DNA strand where it exits the tetramer. Each RuvB hexamer is contacted by two RuvA subunits (via domain III) on 2 adjacent RuvB subunits; this complex drives branch migration. In the full resolvosome a probable DNA-RuvA(4)-RuvB(12)-RuvC(2) complex forms which resolves the HJ.

The protein localises to the cytoplasm. It catalyses the reaction ATP + H2O = ADP + phosphate + H(+). Its function is as follows. The RuvA-RuvB-RuvC complex processes Holliday junction (HJ) DNA during genetic recombination and DNA repair, while the RuvA-RuvB complex plays an important role in the rescue of blocked DNA replication forks via replication fork reversal (RFR). RuvA specifically binds to HJ cruciform DNA, conferring on it an open structure. The RuvB hexamer acts as an ATP-dependent pump, pulling dsDNA into and through the RuvAB complex. RuvB forms 2 homohexamers on either side of HJ DNA bound by 1 or 2 RuvA tetramers; 4 subunits per hexamer contact DNA at a time. Coordinated motions by a converter formed by DNA-disengaged RuvB subunits stimulates ATP hydrolysis and nucleotide exchange. Immobilization of the converter enables RuvB to convert the ATP-contained energy into a lever motion, pulling 2 nucleotides of DNA out of the RuvA tetramer per ATP hydrolyzed, thus driving DNA branch migration. The RuvB motors rotate together with the DNA substrate, which together with the progressing nucleotide cycle form the mechanistic basis for DNA recombination by continuous HJ branch migration. Branch migration allows RuvC to scan DNA until it finds its consensus sequence, where it cleaves and resolves cruciform DNA. This is Holliday junction branch migration complex subunit RuvB from Saccharopolyspora erythraea (strain ATCC 11635 / DSM 40517 / JCM 4748 / NBRC 13426 / NCIMB 8594 / NRRL 2338).